Here is a 423-residue protein sequence, read N- to C-terminus: MAGRRFGWSRAALLQLILGVNLMVMPRTQARTLRFVTLLYRHGDRSPVKAYPKDPHQEDKWPQGFGQLTKEGMLQHWELGQALRQRYHGFLNTSYHRQEVYVRSTDFDRTLMSAEANLAGLFPPDGIQRFNPNISWQPIPVHTVPVAEDRLLKFPLGPCPRFEQLQNETRRMPEYQNESVQNAQFLDMVANETGLTDLSLETVWNVYDTLFCEQTHGLPLPPWASPQTMQRLSRLKDFSFRFLFGIYKQAEKARLQGGVLLAQIRKNLTLMATTSQLPKLLVYSAHDTTLVALHMALGVYNGEQAPYASCHMFELYQEDSGNFSVEMYFRNESHRAPWPLTLPGCSHRCPLQDFLRLTEPVVPKDWLQECQLAGGPADTEVIVALAVCGSILFLLIVLLLTVLFRVQAQPPGYRHVPDGEDHA.

The first 30 residues, 1-30, serve as a signal peptide directing secretion; it reads MAGRRFGWSRAALLQLILGVNLMVMPRTQA. Topologically, residues 31–380 are lumenal; the sequence is RTLRFVTLLY…QLAGGPADTE (350 aa). The active-site Nucleophile is the His42. N-linked (GlcNAc...) asparagine glycans are attached at residues Asn92, Asn133, Asn167, Asn177, Asn191, and Asn267. 3 disulfides stabilise this stretch: Cys159–Cys370, Cys212–Cys310, and Cys345–Cys349. Asp287 acts as the Proton donor in catalysis. 2 N-linked (GlcNAc...) asparagine glycosylation sites follow: Asn322 and Asn331. Residues 381–401 traverse the membrane as a helical segment; that stretch reads VIVALAVCGSILFLLIVLLLT. Residues 402-423 lie on the Cytoplasmic side of the membrane; it reads VLFRVQAQPPGYRHVPDGEDHA.

This sequence belongs to the histidine acid phosphatase family. The membrane-bound form is converted to the soluble form by sequential proteolytic processing. First, the C-terminal cytoplasmic tail is removed. Cleavage by a lysosomal protease releases the soluble form in the lysosome lumen.

Its subcellular location is the lysosome membrane. It is found in the lysosome lumen. The enzyme catalyses a phosphate monoester + H2O = an alcohol + phosphate. This Bos taurus (Bovine) protein is Lysosomal acid phosphatase (ACP2).